The chain runs to 122 residues: Small ribosomal subunit protein uS13 (122 aa).

The interval 95–122 is disordered; it reads GLPVHGQRTKTNARTRKGPARTVAGKKK.

It belongs to the universal ribosomal protein uS13 family. As to quaternary structure, part of the 30S ribosomal subunit. Forms a loose heterodimer with protein S19. Forms two bridges to the 50S subunit in the 70S ribosome.

Functionally, located at the top of the head of the 30S subunit, it contacts several helices of the 16S rRNA. In the 70S ribosome it contacts the 23S rRNA (bridge B1a) and protein L5 of the 50S subunit (bridge B1b), connecting the 2 subunits; these bridges are implicated in subunit movement. Contacts the tRNAs in the A and P-sites. This is Small ribosomal subunit protein uS13 from Geotalea uraniireducens (strain Rf4) (Geobacter uraniireducens).